The sequence spans 278 residues: MQGAKSLGRKQITSCHWNIPTFEYRVNKEEGVYVLLEGELTVQDIDSTFCLAPGELLFVRRGSYVVSTKGKDSRILWIPLSAQFLQGFVQRFGALLSEVERCDEPVPGIIAFAATPLLAGCVKGLKELLVHEHPPMLACLKIEELLMLFAFSPQGPLLMSVLRQLSNRHVERLQLFMEKHYLNEWKLSDFSREFGMGLTTFKELFGSVYGVSPRAWISERRILYAHQLLLNSDMSIVDIAMEAGFSSQSYFTQSYRRRFGCTPSRSRQGKDECRAKNN.

An HTH araC/xylS-type domain is found at 171–269 (ERLQLFMEKH…GCTPSRSRQG (99 aa)). 2 DNA-binding regions (H-T-H motif) span residues 188 to 209 (SDFS…GSVY) and 236 to 259 (IVDI…RRRF).

As to quaternary structure, homodimer. Interacts with ExsD; this interaction inhibits ExsA activity.

With respect to regulation, in the absence of inducing signals such as low Ca(2+) or host cell contact, the T3SS/injectisome is expressed at a low basal level and exists in a quiescent state due to ExsA sequestration by ExsD in a 1:1 complex. Upon host cell contact, this interaction is disrupted by the anti-antiactivator protein ExsC leading to ExsA activation. Transcriptional regulator that plays an essential role in the activation the type III secretion system (T3SS) operons. In addition, ExsA directly regulates the transcription of ImpA virulence factor that cooperatively inhibits the functions of host macrophages together with the T3SS. The protein is HTH-type transcriptional regulator ExsA (exsA) of Pseudomonas aeruginosa (strain ATCC 15692 / DSM 22644 / CIP 104116 / JCM 14847 / LMG 12228 / 1C / PRS 101 / PAO1).